The sequence spans 919 residues: MAGTLLQPVALGTTFAGRVSGQRWKSHGTRRPPSMLAMSLSRPVKMAAFVGLRSVHSFSVTPVTNFRSTVASYRSRRGRRARFVTRSMFERFTEKAIKVIMLAQEEARRLGHNFVGTEQILLGLIGEGTGIAAKVLKSMGINLKDARVEVEKIIGRGNGFVAVEIPFTPRAKRVLELSLEEARQLGHNYIGSEHLLLGLLREGEGVAARVLESLGADPSNIRTQVIRMIGETTEAVGAGVGGGSSGNKMPTLEEYGTNLTKLAEEGKLDPVVGRQPQIERVVQILGRRTKNNPCLIGEPGVGKTAIAEGLAQRISTGDVPETIEGKKVITLDMGLLVAGTKYRGEFEERLKKLMEEIKQSDEIILFIDEVHTLIGAGAAEGAIDAANILKPALARGELQCIGATTLDEYRKHIEKDPALERRFQPVRVPEPTVDETIEILRGLRERYEIHHKLRYTDDALISAAKLSYQYISDRFLPDKAIDLIDEAGSRVRLRHAQVPEEARELDKELKQITKDKNEAVRSQDFEKAGELRDREMELKAQITALIDKSKEMSKAETESGETGPLVNEADIQHIVSSWTGIPVEKVSSDESDKLLKMEETLHQRVIGQDEAVKAISRSIRRARVGLKNPNRPIASFIFAGPTGVGKSELAKALAAYYFGSEEAMIRLDMSEFMERHTVSKLIGSPPGYVGYTEGGQLTEAVRRRPYTVVLFDEIEKAHPDVFNMMLQILEDGRLTDSKGRTVDFKNTLLIMTSNVGSSVIEKGGRKIGFDLDYDEKDSSYSRIKSLVVEEMKQYFRPEFLNRLDEMIVFRQLTKLEVKEIAEIMLKEVFDRLKAKDIDLQVTEKFKERIVDEGFNPSYGARPLRRAIMRLLEDSLAEKMLAGEVKEGDSAIVDVDSEGKVIVLNGQSGLPELSTPAVTV.

A chloroplast-targeting transit peptide spans 1–54 (MAGTLLQPVALGTTFAGRVSGQRWKSHGTRRPPSMLAMSLSRPVKMAAFVGLRS). Residues 89-231 (FERFTEKAIK…RTQVIRMIGE (143 aa)) enclose the Clp R domain. 2 repeat regions span residues 92 to 157 (FTEK…IGRG) and 167 to 231 (FTPR…MIGE). The tract at residues 252–499 (LEEYGTNLTK…RVRLRHAQVP (248 aa)) is i. Position 297 to 304 (297 to 304 (GEPGVGKT)) interacts with ATP. The 36-residue stretch at 506–541 (DKELKQITKDKNEAVRSQDFEKAGELRDREMELKAQ) folds into the UVR domain. The II stretch occupies residues 566–757 (VNEADIQHIV…LLIMTSNVGS (192 aa)). Residue 640–647 (GPTGVGKS) coordinates ATP.

It belongs to the ClpA/ClpB family. ClpC subfamily.

Its subcellular location is the plastid. The protein resides in the chloroplast. Molecular chaperone that may interact with a ClpP-like protease involved in degradation of denatured proteins in the chloroplast. The protein is Chaperone protein ClpC2, chloroplastic (CLPC2) of Oryza sativa subsp. japonica (Rice).